We begin with the raw amino-acid sequence, 228 residues long: Putative N-acetylmannosamine-6-phosphate 2-epimerase (228 aa).

Belongs to the NanE family.

The enzyme catalyses an N-acyl-D-glucosamine 6-phosphate = an N-acyl-D-mannosamine 6-phosphate. It functions in the pathway amino-sugar metabolism; N-acetylneuraminate degradation; D-fructose 6-phosphate from N-acetylneuraminate: step 3/5. Its function is as follows. Converts N-acetylmannosamine-6-phosphate (ManNAc-6-P) to N-acetylglucosamine-6-phosphate (GlcNAc-6-P). The polypeptide is Putative N-acetylmannosamine-6-phosphate 2-epimerase (Thermosynechococcus vestitus (strain NIES-2133 / IAM M-273 / BP-1)).